The sequence spans 597 residues: Cytosolic Fe-S cluster assembly factor nar1 (597 aa).

[4Fe-4S] cluster-binding residues include Cys-20, Cys-62, Cys-65, Cys-68, Cys-216, and Cys-271. The interval 428 to 449 (RASRLPGGNRRLPVGRGAASGS) is disordered. The [4Fe-4S] cluster site is built by Cys-462 and Cys-466. A disordered region spans residues 479-505 (REASSSVQSSTSAEVPDSSSKPTPHEQ).

This sequence belongs to the NARF family.

Functionally, component of the cytosolic Fe/S protein assembly machinery. Required for maturation of extramitochondrial Fe/S proteins. May play a role in the transfer of pre-assembled Fe/S clusters to target apoproteins. In Aspergillus niger (strain ATCC MYA-4892 / CBS 513.88 / FGSC A1513), this protein is Cytosolic Fe-S cluster assembly factor nar1 (nar1).